The following is a 360-amino-acid chain: Spermidine/putrescine-binding periplasmic protein 1 (360 aa).

A signal peptide spans 1-16; the sequence is MKKFAGLITASFVAAT.

This sequence belongs to the bacterial solute-binding protein PotD/PotF family.

The protein localises to the periplasm. Functionally, required for the activity of the bacterial periplasmic transport system of putrescine and spermidine. Polyamine binding protein. In Haemophilus influenzae (strain ATCC 51907 / DSM 11121 / KW20 / Rd), this protein is Spermidine/putrescine-binding periplasmic protein 1 (potD-B).